Here is a 270-residue protein sequence, read N- to C-terminus: Glucosamine-6-phosphate deaminase (270 aa).

Aspartate 72 functions as the Proton acceptor; for enolization step in the catalytic mechanism. The active-site For ring-opening step is aspartate 141. Catalysis depends on histidine 143, which acts as the Proton acceptor; for ring-opening step. The For ring-opening step role is filled by glutamate 148.

The protein belongs to the glucosamine/galactosamine-6-phosphate isomerase family. NagB subfamily.

It catalyses the reaction alpha-D-glucosamine 6-phosphate + H2O = beta-D-fructose 6-phosphate + NH4(+). It functions in the pathway amino-sugar metabolism; N-acetylneuraminate degradation; D-fructose 6-phosphate from N-acetylneuraminate: step 5/5. Its activity is regulated as follows. Allosterically activated by N-acetylglucosamine 6-phosphate (GlcNAc6P). Catalyzes the reversible isomerization-deamination of glucosamine 6-phosphate (GlcN6P) to form fructose 6-phosphate (Fru6P) and ammonium ion. This is Glucosamine-6-phosphate deaminase from Parabacteroides distasonis (strain ATCC 8503 / DSM 20701 / CIP 104284 / JCM 5825 / NCTC 11152).